Consider the following 281-residue polypeptide: Peptidyl-prolyl cis-trans isomerase CYP28, chloroplastic (281 aa).

Residues 1 to 24 (MASSSILIPPILTRRNLLLSTTIA) constitute a chloroplast transit peptide. Residues 66–268 (STTPCSDSTP…KTVFISGCGE (203 aa)) enclose the PPIase cyclophilin-type domain.

This sequence belongs to the cyclophilin-type PPIase family. In terms of processing, S-nytrosylated during the hypersensitive disease resistance response. In terms of tissue distribution, ubiquitous. Not detected in roots.

The protein localises to the plastid. It localises to the chloroplast. The catalysed reaction is [protein]-peptidylproline (omega=180) = [protein]-peptidylproline (omega=0). PPIases accelerate the folding of proteins. It catalyzes the cis-trans isomerization of proline imidic peptide bonds in oligopeptides. The sequence is that of Peptidyl-prolyl cis-trans isomerase CYP28, chloroplastic (CYP28) from Arabidopsis thaliana (Mouse-ear cress).